The chain runs to 804 residues: ATP-dependent RNA helicase dbp4 (804 aa).

Residues 1–24 form a disordered region; sequence MAPANAPRNGKYAKSSQRTLKRKR. The Q motif signature appears at 46–74; it reads KAFTDLPLSEPTLSGLSASHYKTLTDIQS. One can recognise a Helicase ATP-binding domain in the interval 77–251; sequence VSHALKGRDI…RLSLQDPEYV (175 aa). 90-97 serves as a coordination point for ATP; the sequence is AKTGSGKT. A DEAD box motif is present at residues 199–202; the sequence is DEAD. The Helicase C-terminal domain occupies 277-436; sequence KLDILWSFIR…SIKNQLQNMC (160 aa). Disordered regions lie at residues 493–541, 589–615, and 695–804; these read GDDT…DRMF, DKQL…KDVK, and LADV…GLLG. The span at 521–541 shows a compositional bias: basic and acidic residues; the sequence is DEKKSKKKDAPQVRTKYDRMF. A compositionally biased stretch (basic and acidic residues) spans 695–705; the sequence is LADVEDKELVK. A compositionally biased stretch (basic residues) spans 706–715; it reads QKRREKKEKR.

The protein belongs to the DEAD box helicase family. DDX10/DBP4 subfamily. In terms of assembly, interacts with the U3 and U14 snoRNAs. Associates with pre-ribosomal complexes.

It is found in the nucleus. The protein localises to the nucleolus. The enzyme catalyses ATP + H2O = ADP + phosphate + H(+). ATP-dependent RNA helicase required for ribosome biogenesis. Involved in the release of U14 snoRNA in pre-ribosomal complexes. Required for pre-rRNA cleavage at site A2. This Aspergillus terreus (strain NIH 2624 / FGSC A1156) protein is ATP-dependent RNA helicase dbp4 (dbp4).